Here is a 540-residue protein sequence, read N- to C-terminus: MNTVVTLPTEQAPQTLENVGRFDRPLIIILDFGSQYSELIARRIRETQVYSEVLSYRTTSEQLRQLNPKGIILSGGPSSVYGDNAPHCDPEIWNLGIPVLGVCYGMQLMVNQLGGEVAKADRGEYGKASLYIDDPTDLLTNVEDGTTMWMSHGDSVTQMPSGFELLAHTENTPCAAIADHERKLYGVQFHPEVVHSIGGIALIRNFVYHICDCEPTWTTAAFVEEAIREIRTRVGEKRVLLALSGGVDSSTLAFLLYKAIGEQLTCVFIDQGFMRKYEPERLVKLFQEQFHIPVEYVNARDRFLAKVAGVTDPEEKRRRIGHEFINVFEETSKRLGHFDYLAQGTLYPDVIESADTNADPQTGERVAVKIKSHHNVGGLPKDLRFKLVEPLRKLFKDEVRKVGRSIGLPEEIVQRQPFPGPGLAIRILGEVTSERLNILRDADLIVRQEINQRGMYHDFWQAFAVLLPIRSVGVMGDQRTYAYPIVLRIVTSEDGMTADWARVPYDVLEVISTRIVNEVKGVNRVVYDITSKPPGTIEWE.

Residues 26 to 216 (LIIILDFGSQ…VYHICDCEPT (191 aa)) form the Glutamine amidotransferase type-1 domain. The Nucleophile role is filled by Cys-103. Residues His-190 and Glu-192 contribute to the active site. Residues 217 to 415 (WTTAAFVEEA…IGLPEEIVQR (199 aa)) form the GMPS ATP-PPase domain. 244–250 (SGGVDSS) is a binding site for ATP.

Homodimer.

It carries out the reaction XMP + L-glutamine + ATP + H2O = GMP + L-glutamate + AMP + diphosphate + 2 H(+). It participates in purine metabolism; GMP biosynthesis; GMP from XMP (L-Gln route): step 1/1. In terms of biological role, catalyzes the synthesis of GMP from XMP. The sequence is that of GMP synthase [glutamine-hydrolyzing] from Nostoc punctiforme (strain ATCC 29133 / PCC 73102).